Consider the following 618-residue polypeptide: Dihydroxy-acid dehydratase (618 aa).

Asp-81 is a Mg(2+) binding site. Cys-122 lines the [2Fe-2S] cluster pocket. Residues Asp-123 and Lys-124 each contribute to the Mg(2+) site. An N6-carboxylysine modification is found at Lys-124. Cys-197 lines the [2Fe-2S] cluster pocket. Residue Glu-493 coordinates Mg(2+). Ser-519 functions as the Proton acceptor in the catalytic mechanism.

Belongs to the IlvD/Edd family. In terms of assembly, homodimer. Requires [2Fe-2S] cluster as cofactor. Mg(2+) is required as a cofactor.

The enzyme catalyses (2R)-2,3-dihydroxy-3-methylbutanoate = 3-methyl-2-oxobutanoate + H2O. It catalyses the reaction (2R,3R)-2,3-dihydroxy-3-methylpentanoate = (S)-3-methyl-2-oxopentanoate + H2O. Its pathway is amino-acid biosynthesis; L-isoleucine biosynthesis; L-isoleucine from 2-oxobutanoate: step 3/4. It participates in amino-acid biosynthesis; L-valine biosynthesis; L-valine from pyruvate: step 3/4. Its function is as follows. Functions in the biosynthesis of branched-chain amino acids. Catalyzes the dehydration of (2R,3R)-2,3-dihydroxy-3-methylpentanoate (2,3-dihydroxy-3-methylvalerate) into 2-oxo-3-methylpentanoate (2-oxo-3-methylvalerate) and of (2R)-2,3-dihydroxy-3-methylbutanoate (2,3-dihydroxyisovalerate) into 2-oxo-3-methylbutanoate (2-oxoisovalerate), the penultimate precursor to L-isoleucine and L-valine, respectively. The protein is Dihydroxy-acid dehydratase of Bordetella avium (strain 197N).